The sequence spans 1205 residues: Nitric oxide synthase 3 (1205 aa).

Disordered stretches follow at residues 1-20 and 26-73; these read MGNL…LGLG and CGKQ…FPRV. The span at 33–47 shows a compositional bias: pro residues; the sequence is SPAPEPSWAPAPATP. Residues Cys-96 and Cys-101 each contribute to the Zn(2+) site. Residues 100-489 form an interaction with NOSIP region; sequence RCLGSLVLPR…PDPWKGSAAK (390 aa). (6R)-L-erythro-5,6,7,8-tetrahydrobiopterin is bound at residue Ser-104. Ser-116 bears the Phosphoserine mark. Cys-186 provides a ligand contact to heme b. Positions 250, 359, 360, and 364 each coordinate L-arginine. Position 368 (Arg-368) interacts with (6R)-L-erythro-5,6,7,8-tetrahydrobiopterin. Asn-369 is a binding site for L-arginine. Residues Ala-449, Trp-450, and Phe-463 each coordinate (6R)-L-erythro-5,6,7,8-tetrahydrobiopterin. Tyr-478 serves as a coordination point for heme b. Thr-498 is subject to Phosphothreonine. 6 residues coordinate FMN: Ser-529, Glu-530, Thr-531, Arg-533, Ser-575, and Thr-576. Phosphoserine is present on residues Ser-618, Ser-636, and Ser-641. Ser-657, Cys-664, Glu-690, and Gln-694 together coordinate FMN. Arg-781 contributes to the NADP(+) binding site. The interval 796–850 is disordered; that stretch reads LQYQPGDHISPHPPPRSSHRPGQGGPRVAPFSERPLMPRTPPPGGPPPSWVRDPR. Position 803 (His-803) interacts with FAD. Over residues 833-844 the composition is skewed to pro residues; it reads PRTPPPGGPPPS. 5 residues coordinate FAD: Arg-939, Tyr-941, Ser-942, Thr-957, and Ala-959. Residues Thr-1018, Arg-1051, Ser-1080, Arg-1081, Lys-1087, Tyr-1089, and Gln-1091 each coordinate NADP(+). At Thr-1177 the chain carries Phosphothreonine. Phosphoserine occurs at positions 1179 and 1181.

The protein belongs to the NOS family. As to quaternary structure, homodimer. Interacts with NOSIP and NOSTRIN. Interacts with HSP90AB1. Forms a complex with ASL, ASS1 and SLC7A1; the complex regulates cell-autonomous L-arginine synthesis and citrulline recycling while channeling extracellular L-arginine to nitric oxide synthesis pathway. It depends on heme b as a cofactor. FAD serves as cofactor. FMN is required as a cofactor. Requires (6R)-L-erythro-5,6,7,8-tetrahydrobiopterin as cofactor.

The protein localises to the membrane. It is found in the caveola. The protein resides in the cytoplasm. Its subcellular location is the cytoskeleton. It localises to the golgi apparatus. The protein localises to the cell membrane. It carries out the reaction 2 L-arginine + 3 NADPH + 4 O2 + H(+) = 2 L-citrulline + 2 nitric oxide + 3 NADP(+) + 4 H2O. With respect to regulation, stimulated by calcium/calmodulin. Inhibited by NOSIP and NOSTRIN. Produces nitric oxide (NO) which is implicated in vascular smooth muscle relaxation through a cGMP-mediated signal transduction pathway. NO mediates vascular endothelial growth factor (VEGF)-induced angiogenesis in coronary vessels and promotes blood clotting through the activation of platelets. In Ovis aries (Sheep), this protein is Nitric oxide synthase 3 (NOS3).